We begin with the raw amino-acid sequence, 512 residues long: 2-isopropylmalate synthase (512 aa).

The 264-residue stretch at L5–V268 folds into the Pyruvate carboxyltransferase domain. Mn(2+) contacts are provided by D14, H202, H204, and N239. Positions G394–G512 are regulatory domain.

It belongs to the alpha-IPM synthase/homocitrate synthase family. LeuA type 1 subfamily. In terms of assembly, homodimer. It depends on Mn(2+) as a cofactor.

It is found in the cytoplasm. The catalysed reaction is 3-methyl-2-oxobutanoate + acetyl-CoA + H2O = (2S)-2-isopropylmalate + CoA + H(+). It participates in amino-acid biosynthesis; L-leucine biosynthesis; L-leucine from 3-methyl-2-oxobutanoate: step 1/4. Functionally, catalyzes the condensation of the acetyl group of acetyl-CoA with 3-methyl-2-oxobutanoate (2-ketoisovalerate) to form 3-carboxy-3-hydroxy-4-methylpentanoate (2-isopropylmalate). The sequence is that of 2-isopropylmalate synthase from Acidovorax ebreus (strain TPSY) (Diaphorobacter sp. (strain TPSY)).